A 200-amino-acid chain; its full sequence is Somatotropin (200 aa).

An N-terminal signal peptide occupies residues 1–22 (MARVLVLLSVVVASLLFSQGAT). His38 lines the Zn(2+) pocket. A disulfide bridge connects residues Cys71 and Cys173. A Zn(2+)-binding site is contributed by Glu182. Cysteines 190 and 198 form a disulfide.

Belongs to the somatotropin/prolactin family.

Its subcellular location is the secreted. In terms of biological role, growth hormone plays an important role in growth control and is involved in the regulation of several anabolic processes. Implicated as an osmoregulatory substance important for seawater adaptation. The polypeptide is Somatotropin (gh) (Ictalurus punctatus (Channel catfish)).